A 345-amino-acid chain; its full sequence is S-adenosylmethionine:tRNA ribosyltransferase-isomerase (345 aa).

It belongs to the QueA family. As to quaternary structure, monomer.

The protein localises to the cytoplasm. It catalyses the reaction 7-aminomethyl-7-carbaguanosine(34) in tRNA + S-adenosyl-L-methionine = epoxyqueuosine(34) in tRNA + adenine + L-methionine + 2 H(+). Its pathway is tRNA modification; tRNA-queuosine biosynthesis. Its function is as follows. Transfers and isomerizes the ribose moiety from AdoMet to the 7-aminomethyl group of 7-deazaguanine (preQ1-tRNA) to give epoxyqueuosine (oQ-tRNA). The polypeptide is S-adenosylmethionine:tRNA ribosyltransferase-isomerase (Anaeromyxobacter sp. (strain K)).